The primary structure comprises 213 residues: MNKESKDDDMSLGKFSFSHFLYYLVLIVVIVYGLYKLFTGHGSDINFGKFLLRTSPYMWANLGIALCVGLSVVGAAWGIFITGSSMIGAGVRAPRITTKNLISIIFCEVVAIYGLIIAIVFSSKLTVATAENMYSKSNLYTGYSLFWAGITVGASNLICGIAVGITGATAAISDAADSALFVKILVIEIFGSILGLLGLIVGLLMAGKASEFQ.

Over 1–14 (MNKESKDDDMSLGK) the chain is Vacuolar. A helical transmembrane segment spans residues 15-35 (FSFSHFLYYLVLIVVIVYGLY). The Cytoplasmic portion of the chain corresponds to 36-61 (KLFTGHGSDINFGKFLLRTSPYMWAN). The helical transmembrane segment at 62–82 (LGIALCVGLSVVGAAWGIFIT) threads the bilayer. Over 83–100 (GSSMIGAGVRAPRITTKN) the chain is Vacuolar. Residues 101 to 121 (LISIIFCEVVAIYGLIIAIVF) traverse the membrane as a helical segment. Topologically, residues 122-144 (SSKLTVATAENMYSKSNLYTGYS) are cytoplasmic. Residues 145–165 (LFWAGITVGASNLICGIAVGI) traverse the membrane as a helical segment. Residues 166 to 183 (TGATAAISDAADSALFVK) are Vacuolar-facing. Residues 184–204 (ILVIEIFGSILGLLGLIVGLL) form a helical membrane-spanning segment. Over 205-213 (MAGKASEFQ) the chain is Cytoplasmic.

This sequence belongs to the V-ATPase proteolipid subunit family. In terms of assembly, V-ATPase is a heteromultimeric enzyme composed of a peripheral catalytic V1 complex (components A to H) attached to an integral membrane V0 proton pore complex (components: a, c, c', c'', d, e, f and VOA1). The decameric c-ring forms the proton-conducting pore, and is composed of eight proteolipid subunits c, one subunit c' and one subunit c''.

Its subcellular location is the vacuole membrane. Proton-conducting pore forming subunit of the V0 complex of vacuolar(H+)-ATPase (V-ATPase), a multisubunit enzyme composed of a peripheral complex (V1) that hydrolyzes ATP and a membrane integral complex (V0) that translocates protons. V-ATPase is responsible for acidifying and maintaining the pH of intracellular compartments. The chain is V-type proton ATPase subunit c'' (VMA16) from Saccharomyces cerevisiae (strain ATCC 204508 / S288c) (Baker's yeast).